We begin with the raw amino-acid sequence, 450 residues long: MTINYHKEIMTSHPWTFFLLLFKWKGSIWKAVYMETIIFLICYGIISVIYKTAMGESSQRTFESLVRYFDKRLSYIPLEFVLGFFVTTVVNRWTKLYQTIGFIDNVGLMANCYIRGATEKARIYRRNIMRYCELVQILVFRDMSMRTRRRFPTMETVVAAGFMNKHELELYNSYDTKYNSKLGTKYWIPANWALCMTYKARKDGYIESDYFKAQMEGEIRTWRTNIEWVCNYDWVPLPLMYPQLVCLAVNLYFLVSIIARQLVIEKHKMVDEVDVYFPVMTFLQFIFYMGWLKVIDVMLNPFGEDDDDFETNALIDRNITMGLMIADNPMSTPELRKDPFYDEVDVPLLYSEESSNIPNHHYHGSVSEVRLEQKGNAPVMMMPHSQSAANLRRMMSFKSVDEDEKDINAFSMSHDDARMRNWREVSLDSSFLADLNENKEWKIPTNPQKF.

The Cytoplasmic portion of the chain corresponds to 1–31; sequence MTINYHKEIMTSHPWTFFLLLFKWKGSIWKA. Residues 32-51 form a helical membrane-spanning segment; it reads VYMETIIFLICYGIISVIYK. Over 52–60 the chain is Extracellular; the sequence is TAMGESSQR. A helical transmembrane segment spans residues 61–82; it reads TFESLVRYFDKRLSYIPLEFVL. Topologically, residues 83–242 are cytoplasmic; it reads GFFVTTVVNR…DWVPLPLMYP (160 aa). Residues 243–260 form a helical membrane-spanning segment; sequence QLVCLAVNLYFLVSIIAR. At 261–278 the chain is on the extracellular side; that stretch reads QLVIEKHKMVDEVDVYFP. Residues 279 to 292 form a helical membrane-spanning segment; that stretch reads VMTFLQFIFYMGWL. Residues 293 to 450 lie on the Cytoplasmic side of the membrane; it reads KVIDVMLNPF…WKIPTNPQKF (158 aa). Positions 300, 305, and 308 each coordinate Ca(2+).

The protein belongs to the anion channel-forming bestrophin (TC 1.A.46) family. Calcium-sensitive chloride channel subfamily. In terms of assembly, forms oligomers.

It is found in the cell membrane. It catalyses the reaction chloride(in) = chloride(out). In terms of biological role, ligand-gated anion channel that allows the movement of chloride monoatomic anions across cell membranes when activated by Calcium (Ca2+). The protein is Bestrophin homolog 1 (best-1) of Caenorhabditis elegans.